The chain runs to 608 residues: Endo-1,4-beta-xylanase C (608 aa).

The first 25 residues, 1-25 (MKTFSVTKSSVVFAMALGMASTAFA), serve as a signal peptide directing secretion. The region spanning 40–250 (TITSNQTGKI…VNGEVRGGHM (211 aa)) is the GH11 1 domain. Glu142 (nucleophile) is an active-site residue. The active-site Proton donor is Glu237. A compositionally biased stretch (low complexity) spans 263–294 (SDPVSSSSVKSSSSTDAPKSSSSKGNGNVSGK). The tract at residues 263-296 (SDPVSSSSVKSSSSTDAPKSSSSKGNGNVSGKID) is disordered. In terms of domain architecture, GH11 2 spans 316 to 514 (NSSVTGNVGS…GSGSFDVTYF (199 aa)). Residue Glu409 is the Nucleophile of the active site. Glu501 serves as the catalytic Proton donor. Residues 520–539 (AHPLAQPEPESSSSEAKVES) are disordered. Residues 527-539 (EPESSSSEAKVES) are compositionally biased toward low complexity.

Belongs to the glycosyl hydrolase 11 (cellulase G) family.

The enzyme catalyses Endohydrolysis of (1-&gt;4)-beta-D-xylosidic linkages in xylans.. Its pathway is glycan degradation; xylan degradation. Its function is as follows. Cleaves xylans with the production of xylose, xylobiose and xylo-oligosaccharides. In Fibrobacter succinogenes (strain ATCC 19169 / S85), this protein is Endo-1,4-beta-xylanase C (xynC).